The chain runs to 149 residues: Ricin B-like lectin (149 aa).

Ser2 is modified (N-acetylserine). Asp21, Gly24, Asn39, and Asn47 together coordinate a carbohydrate. The segment at 110 to 112 (PNL) is involved in dimerization.

As to quaternary structure, homodimer. Post-translationally, the N-terminus is blocked.

Its function is as follows. Lectin specific for terminal, non-reducing N-acetylgalactosamine (Gal-NAc)-containing carbohydrates including N,N'-diacetyllactosediamine/LDN (GalNAcbeta1-4GlcNAc, LacdiNAc). Specific also for carbohydrates containing N-acetylglucosamine (-GlcNAc) or N-acetyllactosamine (-Galbeta1-4GlcNAc) at the reducing end. Agglutinates human blood group A, AB, B and O erythrocytes with a strong preference for group A. Agglutinates bovine erythrocytes with a very low specificity. Binds carbohydrates bivalently, which is required for its biological activity. Exhibits insecticidal activity against the fruit fly D.melanogaster, mosquito A.aegypti, and amoebozoa A.castellanii. Has anti-nutritional activity against Colorado potato beetle L.decemlineata, and against worm C.elegans. Has antiproliferative activity against human leukemic T-cells. Has an immunostimulatory effect on human antigen-presenting dendritic cells, which are subsequently able to induce efficient T-cell immune responses. The sequence is that of Ricin B-like lectin from Clitocybe nebularis (Clouded agaric).